A 258-amino-acid polypeptide reads, in one-letter code: MASPAMHPVPPVADVPRHIAIIMDGNGRWAQRRRRPRVIGHRAGARAVNRTIDFCLEKGVSALTLFAFSSENWGRPQDEVDALMKLFLHALDREVGELQRRGVQVRFIGDRSRFAAPLRDRMAGAERSTAANARLVLSIAASYGGRQDIATAARALAEDVAAGRLQPEQIDEALLSSRVALADLPAPDLFIRTGGDTRISNFLLWQLAYTELWFTETLWPEFDAGVMQQALDDYAGRERRFGLTSAQIADKATETSSA.

The active site involves aspartate 24. Aspartate 24 contacts Mg(2+). Substrate-binding positions include 25–28 (GNGR), tryptophan 29, arginine 37, histidine 41, and 69–71 (SSE). The active-site Proton acceptor is the asparagine 72. Substrate contacts are provided by residues tryptophan 73, arginine 75, arginine 192, and 198-200 (RIS). Mg(2+) is bound at residue glutamate 211.

The protein belongs to the UPP synthase family. Homodimer. Mg(2+) serves as cofactor.

The enzyme catalyses 8 isopentenyl diphosphate + (2E,6E)-farnesyl diphosphate = di-trans,octa-cis-undecaprenyl diphosphate + 8 diphosphate. Catalyzes the sequential condensation of isopentenyl diphosphate (IPP) with (2E,6E)-farnesyl diphosphate (E,E-FPP) to yield (2Z,6Z,10Z,14Z,18Z,22Z,26Z,30Z,34E,38E)-undecaprenyl diphosphate (di-trans,octa-cis-UPP). UPP is the precursor of glycosyl carrier lipid in the biosynthesis of bacterial cell wall polysaccharide components such as peptidoglycan and lipopolysaccharide. This is Ditrans,polycis-undecaprenyl-diphosphate synthase ((2E,6E)-farnesyl-diphosphate specific) from Xanthomonas oryzae pv. oryzae (strain KACC10331 / KXO85).